Consider the following 574-residue polypeptide: Calcium-dependent protein kinase 9 (574 aa).

The tract at residues 1–64 (MGNTCCVAPA…RARAKPNPYD (64 aa)) is disordered. Residue Gly-2 is the site of N-myristoyl glycine attachment. The segment covering 28–40 (KSPAPSATTTTAT) has biased composition (low complexity). Positions 101-359 (YQLGRELGRG…AQQVLDHPWL (259 aa)) constitute a Protein kinase domain. ATP is bound by residues 107-115 (LGRGEFGVT) and Lys-130. The active-site Proton acceptor is Asp-225. The segment at 365-395 (APNVPLGDVVRARLKQFSLMNRLKKKAMRVI) is autoinhibitory domain. 4 EF-hand domains span residues 402–437 (EEVE…VGSK), 438–473 (LAEP…LQRL), 474–509 (SNDN…DSGH), and 510–545 (ADDA…GTDW). 20 residues coordinate Ca(2+): Asp-415, Asp-417, Asn-419, Arg-421, Glu-426, Asp-451, Asp-453, Asn-455, Tyr-457, Glu-462, Asp-487, Asp-489, Ser-491, Tyr-493, Glu-498, Asp-523, Asp-525, Asp-527, Arg-529, and Glu-534.

It belongs to the protein kinase superfamily. Ser/Thr protein kinase family. CDPK subfamily. Expressed in leaf blades and stems. Expressed at low levels in anthers and spikelets.

It localises to the membrane. It catalyses the reaction L-seryl-[protein] + ATP = O-phospho-L-seryl-[protein] + ADP + H(+). The enzyme catalyses L-threonyl-[protein] + ATP = O-phospho-L-threonyl-[protein] + ADP + H(+). Its activity is regulated as follows. Activated by calcium. Autophosphorylation may play an important role in the regulation of the kinase activity. May play a role in signal transduction pathways that involve calcium as a second messenger. Functions in signal transduction pathways that positively regulate responses to drought, osmotic, and dehydration stress. Regulates expression of stress-associated genes in response to drought. Involved in tolerance to drought stress by increasing proline and soluble sugars, and improving stomatal closure. Required for pollen maturation and spikelet fertility. This is Calcium-dependent protein kinase 9 from Oryza sativa subsp. japonica (Rice).